The following is an 858-amino-acid chain: Rho GTPase-activating protein 17 (858 aa).

In terms of domain architecture, BAR spans 14-246 (QTVGRAEKTE…MRAHQDKWAE (233 aa)). The Rho-GAP domain occupies 252 to 442 (TPLEEHLKRS…PIIQHADWFF (191 aa)). Residues 459-475 (TPNSNHSSHTGNDSDSG) are compositionally biased toward polar residues. The interval 459 to 482 (TPNSNHSSHTGNDSDSGTLERKRP) is disordered. A Phosphoserine modification is found at Ser-484. The tract at residues 516–823 (RKHISPAFQP…VTDTNSRVSE (308 aa)) is disordered. A compositionally biased stretch (polar residues) spans 543-552 (PSQSSRADSN). Over residues 553-563 (SVGGPVPSSSG) the composition is skewed to low complexity. Ser-575 bears the Phosphoserine mark. Residues 592–617 (RNSNQITTVPNQAQTGGNSHQLSVGT) are compositionally biased toward polar residues. Positions 637–650 (APAPPKPGNPPPGH) are enriched in pro residues. The span at 653-702 (GQSSPGTGTSPKPSTRSPSPPQQQQQQQQQQQQQQQQQQQQQQQQQQQQQ) shows a compositional bias: low complexity. Phosphoserine is present on residues Ser-710 and Ser-712. Composition is skewed to pro residues over residues 716–729 (IQAP…PPTQ) and 738–756 (EPGP…PPPA). 3 positions are modified to phosphothreonine: Thr-742, Thr-746, and Thr-748. Residues 742 to 755 (TPPQTPTPPSTPPP) carry the SH3-binding motif. At Ser-751 the chain carries Phosphoserine. Phosphothreonine is present on Thr-752. Polar residues predominate over residues 757–769 (KQNSSQSETTQLH). Residues 784 to 794 (RPSVPPPPNPP) show a composition bias toward pro residues. Polar residues predominate over residues 806 to 823 (SVPTASRIVTDTNSRVSE).

Component of a complex whose core is composed of ARHGAP17, AMOT, PALS1, PATJ and PARD3/PAR3. Interacts with NHERF1, FNBP1, TRIP10, CAPZA (CAPZA1, CAPZA2 or CAPZA3), CAPZB, CD2AP and SH3KBP1/CIN85. As to expression, highly expressed in brain; neuron-specific (at protein level). Isoform 2, isoform 3 and isoform 4 are predominantly expressed in neuronal tissues and correlate well with the differentiation of neurons, while isoform 1 is strongly expressed in embryonic brain.

It is found in the membrane. The protein localises to the cytoplasm. Its subcellular location is the cell junction. It localises to the tight junction. Functionally, rho GTPase-activating protein involved in the maintenance of tight junction by regulating the activity of CDC42, thereby playing a central role in apical polarity of epithelial cells. Specifically acts as a GTPase activator for the CDC42 GTPase by converting it to an inactive GDP-bound state. The complex formed with AMOT acts by regulating the uptake of polarity proteins at tight junctions, possibly by deciding whether tight junction transmembrane proteins are recycled back to the plasma membrane or sent elsewhere. Participates in the Ca(2+)-dependent regulation of exocytosis, possibly by catalyzing GTPase activity of Rho family proteins and by inducing the reorganization of the cortical actin filaments. Acts as a GTPase activator in vitro for RAC1. In Rattus norvegicus (Rat), this protein is Rho GTPase-activating protein 17 (Arhgap17).